The chain runs to 729 residues: MSAHNTNESAVGKCPFHEQKEEKSVLARGAGGGTSNRDWWPEQLRVDLLNQHSRRSNPLNEHFNYREEFAKLDYPQLKADLKSLLNDSQEWWPADWGSYIGLFIRMAWHSAGTYRTVDGRGGSGRGQQRFAPLNAWPDNVSLDKARRLLWPVKQKYGQKISWADLYILAGNVALENSGFRTFGFAAGREDVWEPDLDINWGEEKEWLTHRHPESLANAPLGATEMGLIYVNPEGPEASGNPASAAPAIRATFGNMGMNDEEIVALIAGGHTLGKTHGAGEASHVGVDPEAAPLESQGLGWTSSYGSGSGADAITSGLEVIWTQTPTQWSNYFFENLFKYEWVQTHSPAGAIQFEAQDAQASIPDPFDADKKRKPTMLVTDLTLRFDPEFEKISRRFLQDPQSFNEAFARAWFKLTHRDMGPKARYLGPEVPKEDLIWQDPLPAPVHQPSPGEINDVKAQIAQSGLSVSELVSVAWASASTFRGGDKRGGANGARLALAPQKEWPVNAIASRALPQLQAIQQASGKISLADTLVLAGVVGIEQAAAAAGVSIDVPFTPGRVDARQEQTDIDSFDLLQPLADGFRNYRRVTGGPSTETLLIDKAQQLTLSTPELTVLVGGLRVLGTNFDGGKHGVLTEHAGVLSNDFFVNLLDMRTAWRAADDSAELFEGYDRKSGEVRYSATRADLVFGSNAILRASAEVYASADAQQKFITDFVAAWGKVMDLDRFDIR.

Residues 1-33 are disordered; that stretch reads MSAHNTNESAVGKCPFHEQKEEKSVLARGAGGG. A compositionally biased stretch (basic and acidic residues) spans 15–25; it reads PFHEQKEEKSV. Residues 108 to 229 constitute a cross-link (tryptophyl-tyrosyl-methioninium (Trp-Tyr) (with M-255)); it reads WHSAGTYRTV…LGATEMGLIY (122 aa). The active-site Proton acceptor is His109. A cross-link (tryptophyl-tyrosyl-methioninium (Tyr-Met) (with W-108)) is located at residues 229–255; the sequence is YVNPEGPEASGNPASAAPAIRATFGNM. Position 270 (His270) interacts with heme b.

This sequence belongs to the peroxidase family. Peroxidase/catalase subfamily. Homodimer or homotetramer. Requires heme b as cofactor. Post-translationally, formation of the three residue Trp-Tyr-Met cross-link is important for the catalase, but not the peroxidase activity of the enzyme.

The enzyme catalyses H2O2 + AH2 = A + 2 H2O. It carries out the reaction 2 H2O2 = O2 + 2 H2O. Its function is as follows. Bifunctional enzyme with both catalase and broad-spectrum peroxidase activity. The chain is Catalase-peroxidase from Erwinia tasmaniensis (strain DSM 17950 / CFBP 7177 / CIP 109463 / NCPPB 4357 / Et1/99).